We begin with the raw amino-acid sequence, 271 residues long: MKSYQPKSLLNDLQYYITPPHDCSYLDNKSARMVFLDPIHRIDVVTLSELSRVGFRRSGDFVYRPECHLCRQCLSCRVPVHDFNMNSLQKKAWKRNQDLRMSIVPTHAATSVHYQLYERYINERHADGDMFPPSLDQFEKFLVHSCTESFFLELWKDDRLICVSTCDLMDDGLSAVYTFFDPDENRRSLGVFAILKQLEYVKSIDLDYLYLGYWVPHSQKMNYKSQYIPLELLLDGQWRRLNRALSQEEISQLGESLMTILPSEWNSMIIK.

The protein belongs to the R-transferase family. Bpt subfamily.

The protein resides in the cytoplasm. It catalyses the reaction N-terminal L-glutamyl-[protein] + L-leucyl-tRNA(Leu) = N-terminal L-leucyl-L-glutamyl-[protein] + tRNA(Leu) + H(+). The enzyme catalyses N-terminal L-aspartyl-[protein] + L-leucyl-tRNA(Leu) = N-terminal L-leucyl-L-aspartyl-[protein] + tRNA(Leu) + H(+). In terms of biological role, functions in the N-end rule pathway of protein degradation where it conjugates Leu from its aminoacyl-tRNA to the N-termini of proteins containing an N-terminal aspartate or glutamate. This Acinetobacter baylyi (strain ATCC 33305 / BD413 / ADP1) protein is Aspartate/glutamate leucyltransferase.